The sequence spans 295 residues: Protoheme IX farnesyltransferase 2 (295 aa).

The next 9 helical transmembrane spans lie at 9 to 29, 36 to 56, 83 to 103, 108 to 128, 135 to 155, 163 to 183, 209 to 229, 230 to 250, and 264 to 284; these read ITKP…FFLA, FALF…GCVF, LPLA…LLYV, LSAF…SLWL, GTLV…CAVS, VTLL…IAIF, IVLY…GGYA, GLGY…MAWG, and VFGF…VDSQ.

The protein belongs to the UbiA prenyltransferase family. Protoheme IX farnesyltransferase subfamily.

The protein localises to the cell inner membrane. The catalysed reaction is heme b + (2E,6E)-farnesyl diphosphate + H2O = Fe(II)-heme o + diphosphate. It functions in the pathway porphyrin-containing compound metabolism; heme O biosynthesis; heme O from protoheme: step 1/1. Functionally, converts heme B (protoheme IX) to heme O by substitution of the vinyl group on carbon 2 of heme B porphyrin ring with a hydroxyethyl farnesyl side group. This Pseudomonas putida (strain GB-1) protein is Protoheme IX farnesyltransferase 2.